The sequence spans 143 residues: MMLIPKKVKFRKQHRPNRKGMSGCGTRIVFGDYGIQALSRAYVTNRQVESARIAMTRHIRRGGRVWINIYPDRPLTKKPAETRMGSGKGSPEYWVANIRPGRIMFEVSGVSESLAKEALMRAIHKLPLRARIVERQEFDDAGL.

It belongs to the universal ribosomal protein uL16 family. Part of the 50S ribosomal subunit.

Binds 23S rRNA and is also seen to make contacts with the A and possibly P site tRNAs. In Tropheryma whipplei (strain TW08/27) (Whipple's bacillus), this protein is Large ribosomal subunit protein uL16.